Reading from the N-terminus, the 122-residue chain is Large ribosomal subunit protein bL12 (122 aa).

This sequence belongs to the bacterial ribosomal protein bL12 family. In terms of assembly, homodimer. Part of the ribosomal stalk of the 50S ribosomal subunit. Forms a multimeric L10(L12)X complex, where L10 forms an elongated spine to which 2 to 4 L12 dimers bind in a sequential fashion. Binds GTP-bound translation factors.

Forms part of the ribosomal stalk which helps the ribosome interact with GTP-bound translation factors. Is thus essential for accurate translation. This chain is Large ribosomal subunit protein bL12, found in Clostridium botulinum (strain 657 / Type Ba4).